The primary structure comprises 634 residues: uncharacterized protein (634 aa).

The signal sequence occupies residues 1–40 (MWLQQRLKGLPGLLSSSWARRLLCLLGLLVLLLWFASSGA). Residues 41–589 (RRAAGGLHLP…DEHMAQQDPG (549 aa)) are Extracellular-facing. A glycan (N-linked (GlcNAc...) asparagine) is linked at N363. A helical transmembrane segment spans residues 590–610 (LPFLFWFSVASLITLFHLFLF). Residues 611-634 (KLIYNEYCGPGAKPLFRSKEDPSV) are Cytoplasmic-facing.

The protein resides in the membrane. This is an uncharacterized protein from Mus musculus (Mouse).